Here is a 407-residue protein sequence, read N- to C-terminus: Putative serine/threonine-protein kinase C01C4.3 (407 aa).

Polar residues predominate over residues 33 to 57; that stretch reads NQLQNHPPRNATQSPQRQPRTSESS. A disordered region spans residues 33–68; it reads NQLQNHPPRNATQSPQRQPRTSESSMDFPRSALRRN. Residues 126–397 enclose the Protein kinase domain; that stretch reads YTVNKQLGTG…RKCLAKEKLL (272 aa). ATP is bound by residues 132–140 and K155; that span reads LGTGRFGFI. N251 acts as the Proton acceptor in catalysis.

It belongs to the protein kinase superfamily. Ser/Thr protein kinase family.

It catalyses the reaction L-seryl-[protein] + ATP = O-phospho-L-seryl-[protein] + ADP + H(+). The catalysed reaction is L-threonyl-[protein] + ATP = O-phospho-L-threonyl-[protein] + ADP + H(+). The polypeptide is Putative serine/threonine-protein kinase C01C4.3 (Caenorhabditis elegans).